A 293-amino-acid polypeptide reads, in one-letter code: METSTFTTKVGLAQMLKGGVIMDVVTPDQAKIAEEAGAVAVMALERVPADIRKDGGVARMSDPEMIQGIIEAVTIPVMAKSRIGHFVEAQILEAIGVDYIDESEVLTPADEEHHTNKHNFKVPFVCGARNLGEALRRITEGAAMIRTKGEAGTGNVVEAVRHARTMFAEIRRLQTLDPDELFVAAKNLQAPYELVKQIAELGRLPVVNFAAGGIATPADAALMMQLGVDGVFVGSGIFKSGNPAKRAKAIVEATTHFRDAKLLAEISRNLGEAMVGINIDTIPENELLAKRGW.

Residue Asp23 participates in D-ribose 5-phosphate binding. The active-site Schiff-base intermediate with D-ribose 5-phosphate is Lys80. D-ribose 5-phosphate is bound at residue Gly152. Position 164 (Arg164) interacts with D-glyceraldehyde 3-phosphate. D-ribose 5-phosphate-binding positions include Gly213 and 234 to 235; that span reads GS.

It belongs to the PdxS/SNZ family. In the presence of PdxT, forms a dodecamer of heterodimers.

The enzyme catalyses aldehydo-D-ribose 5-phosphate + D-glyceraldehyde 3-phosphate + L-glutamine = pyridoxal 5'-phosphate + L-glutamate + phosphate + 3 H2O + H(+). It participates in cofactor biosynthesis; pyridoxal 5'-phosphate biosynthesis. Functionally, catalyzes the formation of pyridoxal 5'-phosphate from ribose 5-phosphate (RBP), glyceraldehyde 3-phosphate (G3P) and ammonia. The ammonia is provided by the PdxT subunit. Can also use ribulose 5-phosphate and dihydroxyacetone phosphate as substrates, resulting from enzyme-catalyzed isomerization of RBP and G3P, respectively. This chain is Pyridoxal 5'-phosphate synthase subunit PdxS, found in Herpetosiphon aurantiacus (strain ATCC 23779 / DSM 785 / 114-95).